Consider the following 811-residue polypeptide: Serine/threonine-protein kinase prpf4B (811 aa).

Disordered regions lie at residues 1–257 (MVIE…TNEP), 288–341 (EKYN…NQIE), 353–379 (KDQN…EDLK), and 408–452 (VSIK…TNGG). The span at 46–71 (SSPASRETSSSKLMSPSKNQSSSSSR) shows a compositional bias: low complexity. A compositionally biased stretch (basic and acidic residues) spans 81-202 (RRKDERYSSS…DNMDSRDNKN (122 aa)). The segment covering 203–215 (GSRQSINNNTLSY) has biased composition (polar residues). A compositionally biased stretch (basic and acidic residues) spans 217 to 240 (KQADRKDEVRVKDNISVNDDKTNH). Polar residues-rich tracts occupy residues 241–257 (GENL…TNEP) and 293–302 (EQPQPITSSL). Residues 310-327 (SNTNTNSNSTPVATTTTS) are compositionally biased toward low complexity. Residues 490-808 (YQIFSPIGSG…PFEALNHEFL (319 aa)) form the Protein kinase domain. Residues 496–504 (IGSGVFSTV) and lysine 519 each bind ATP. The Proton acceptor role is filled by aspartate 619.

Belongs to the protein kinase superfamily. CMGC Ser/Thr protein kinase family. Phosphorylated. Autophosphorylated; phosphorylation inhibits interaction with its targets.

It localises to the nucleus. Its subcellular location is the chromosome. It is found in the centromere. The protein localises to the kinetochore. It carries out the reaction L-seryl-[protein] + ATP = O-phospho-L-seryl-[protein] + ADP + H(+). It catalyses the reaction L-threonyl-[protein] + ATP = O-phospho-L-threonyl-[protein] + ADP + H(+). Serine/threonine kinase involved in spliceosomal assembly as well as mitosis and signaling regulation. The polypeptide is Serine/threonine-protein kinase prpf4B (prp4k) (Dictyostelium discoideum (Social amoeba)).